The following is a 491-amino-acid chain: UDP-N-acetylmuramate--L-alanine ligase (491 aa).

126 to 132 contributes to the ATP binding site; the sequence is GTHGKTT.

This sequence belongs to the MurCDEF family.

The protein resides in the cytoplasm. It carries out the reaction UDP-N-acetyl-alpha-D-muramate + L-alanine + ATP = UDP-N-acetyl-alpha-D-muramoyl-L-alanine + ADP + phosphate + H(+). It participates in cell wall biogenesis; peptidoglycan biosynthesis. Its function is as follows. Cell wall formation. The protein is UDP-N-acetylmuramate--L-alanine ligase of Salmonella paratyphi A (strain ATCC 9150 / SARB42).